Here is a 350-residue protein sequence, read N- to C-terminus: UDP-3-O-acylglucosamine N-acyltransferase (350 aa).

His-244 (proton acceptor) is an active-site residue.

This sequence belongs to the transferase hexapeptide repeat family. LpxD subfamily. In terms of assembly, homotrimer.

The catalysed reaction is a UDP-3-O-[(3R)-3-hydroxyacyl]-alpha-D-glucosamine + a (3R)-hydroxyacyl-[ACP] = a UDP-2-N,3-O-bis[(3R)-3-hydroxyacyl]-alpha-D-glucosamine + holo-[ACP] + H(+). Its pathway is bacterial outer membrane biogenesis; LPS lipid A biosynthesis. In terms of biological role, catalyzes the N-acylation of UDP-3-O-acylglucosamine using 3-hydroxyacyl-ACP as the acyl donor. Is involved in the biosynthesis of lipid A, a phosphorylated glycolipid that anchors the lipopolysaccharide to the outer membrane of the cell. The protein is UDP-3-O-acylglucosamine N-acyltransferase of Janthinobacterium sp. (strain Marseille) (Minibacterium massiliensis).